The chain runs to 437 residues: Protein arginine methyltransferase NDUFAF7 homolog, mitochondrial (437 aa).

Positions 21 to 49 (RPNLGATGTPKMEPPKEQPEASSKAESGH) are disordered.

Belongs to the NDUFAF7 family.

Its subcellular location is the mitochondrion. The enzyme catalyses L-arginyl-[protein] + 2 S-adenosyl-L-methionine = N(omega),N(omega)'-dimethyl-L-arginyl-[protein] + 2 S-adenosyl-L-homocysteine + 2 H(+). Its function is as follows. Arginine methyltransferase involved in the assembly or stability of mitochondrial NADH:ubiquinone oxidoreductase complex (complex I). This chain is Protein arginine methyltransferase NDUFAF7 homolog, mitochondrial, found in Drosophila melanogaster (Fruit fly).